Here is a 347-residue protein sequence, read N- to C-terminus: HTH-type transcriptional regulator PhcA (347 aa).

The 61-residue stretch at 1-61 (MVNVDTKLLV…IRVPHGLTPT (61 aa)) folds into the HTH lysR-type domain. The H-T-H motif DNA-binding region spans 21–40 (ATYVAEKMHMTAPAVSHSLG). The segment at 316–347 (PMHPPMLTDDSGKSGKTGKGDAEKEDESRLSV) is disordered. Positions 325–347 (DSGKSGKTGKGDAEKEDESRLSV) are enriched in basic and acidic residues.

It belongs to the LysR transcriptional regulatory family.

In terms of biological role, regulates the transcription of one or more of the genes involved in virulence. The polypeptide is HTH-type transcriptional regulator PhcA (phcA) (Ralstonia nicotianae (strain ATCC BAA-1114 / GMI1000) (Ralstonia solanacearum)).